Reading from the N-terminus, the 416-residue chain is Lysosome-associated membrane glycoprotein 3 (416 aa).

The first 27 residues, Met-1–Ala-27, serve as a signal peptide directing secretion. At Lys-28–Thr-381 the chain is on the lumenal side. Residues Asn-112, Asn-158, Asn-164, Asn-200, Asn-232, Asn-266, and Asn-291 are each glycosylated (N-linked (GlcNAc...) asparagine). 2 disordered regions span residues Pro-136–Thr-167 and Ser-179–Gln-219. Residues His-143 to Thr-160 show a composition bias toward low complexity. Residues Pro-188 to Ala-208 show a composition bias toward low complexity. Cys-237 and Cys-274 are joined by a disulfide. Residues Cys-339 and Cys-376 are joined by a disulfide bond. A helical membrane pass occupies residues Ile-382 to Tyr-402. The Cytoplasmic segment spans residues Lys-403–Ile-416.

It belongs to the LAMP family. Monomer. Interacts with FURIN. As to quaternary structure, (Microbial infection) Interacts with mumps virus protein F; this interaction promotes protein F cleavage by FURIN. Detected in tonsil interdigitating dendritic cells, in spleen, lymph node, Peyer's patches in the small instestine, in thymus medulla and in B-cells (at protein level). Expressed in lymphoid organs and dendritic cells. Expressed in lung. Up-regulated in carcinomas of the esophagus, colon, rectum, ureter, stomach, breast, fallopian tube, thyroid and parotid tissues.

It is found in the cell surface. The protein resides in the lysosome membrane. It localises to the cytoplasmic vesicle membrane. Its subcellular location is the early endosome membrane. In terms of biological role, lysosomal membrane glycoprotein which plays a role in the unfolded protein response (UPR) that contributes to protein degradation and cell survival during proteasomal dysfunction. Plays a role in the process of fusion of the lysosome with the autophagosome, thereby modulating the autophagic process. Promotes hepatocellular lipogenesis through activation of the PI3K/Akt pathway. May also play a role in dendritic cell function and in adaptive immunity. (Microbial infection) Plays a positive role in post-entry steps of influenza A virus replication, either virus uncoating, cytosolic transport, or nuclear import of viral components, and promotes nuclear accumulation of influenza nucleoprotein/NP at early stages of viral infection. Functionally, (Microbial infection) Supports the FURIN-mediated cleavage of mumps virus fusion protein F by interacting with both FURIN and the unprocessed form but not the processed form of the viral protein F. Its function is as follows. (Microbial infection) Promotes the intracellular proliferation of Salmonella typhimuium. The protein is Lysosome-associated membrane glycoprotein 3 (LAMP3) of Homo sapiens (Human).